A 256-amino-acid polypeptide reads, in one-letter code: Diaminopimelate epimerase (256 aa).

Positions 11 and 63 each coordinate substrate. Cys-72 acts as the Proton donor in catalysis. Substrate contacts are provided by residues 73 to 74 (GN), Asn-169, and 187 to 188 (ER). The Proton acceptor role is filled by Cys-197. 198-199 (GT) is a binding site for substrate.

It belongs to the diaminopimelate epimerase family. Homodimer.

The protein localises to the cytoplasm. It catalyses the reaction (2S,6S)-2,6-diaminopimelate = meso-2,6-diaminopimelate. It functions in the pathway amino-acid biosynthesis; L-lysine biosynthesis via DAP pathway; DL-2,6-diaminopimelate from LL-2,6-diaminopimelate: step 1/1. Its function is as follows. Catalyzes the stereoinversion of LL-2,6-diaminopimelate (L,L-DAP) to meso-diaminopimelate (meso-DAP), a precursor of L-lysine and an essential component of the bacterial peptidoglycan. This chain is Diaminopimelate epimerase, found in Flavobacterium psychrophilum (strain ATCC 49511 / DSM 21280 / CIP 103535 / JIP02/86).